Consider the following 310-residue polypeptide: Quinolinate synthase 2 (310 aa).

Iminosuccinate is bound by residues histidine 30 and serine 47. Cysteine 92 contacts [4Fe-4S] cluster. Residues 118–120 and serine 135 contribute to the iminosuccinate site; that span reads YVN. A [4Fe-4S] cluster-binding site is contributed by cysteine 177. Iminosuccinate contacts are provided by residues 203–205 and threonine 220; that span reads HPE. Cysteine 265 lines the [4Fe-4S] cluster pocket.

This sequence belongs to the quinolinate synthase family. Type 2 subfamily. The cofactor is [4Fe-4S] cluster.

It localises to the cytoplasm. The enzyme catalyses iminosuccinate + dihydroxyacetone phosphate = quinolinate + phosphate + 2 H2O + H(+). The protein operates within cofactor biosynthesis; NAD(+) biosynthesis; quinolinate from iminoaspartate: step 1/1. Catalyzes the condensation of iminoaspartate with dihydroxyacetone phosphate to form quinolinate. The polypeptide is Quinolinate synthase 2 (Methanosarcina acetivorans (strain ATCC 35395 / DSM 2834 / JCM 12185 / C2A)).